Reading from the N-terminus, the 104-residue chain is Class I hydrophobin 12 (104 aa).

The first 25 residues, 1–25, serve as a signal peptide directing secretion; it reads MFSKATLFFTAAVVIVAAGATPTTS. 4 disulfide bridges follow: Cys-27–Cys-85, Cys-34–Cys-79, Cys-35–Cys-67, and Cys-86–Cys-99.

It belongs to the fungal hydrophobin family. In terms of assembly, self-assembles to form functional amyloid fibrils called rodlets. Self-assembly into fibrillar rodlets occurs spontaneously at hydrophobic:hydrophilic interfaces and the rodlets further associate laterally to form amphipathic monolayers.

The protein localises to the secreted. Its subcellular location is the cell wall. In terms of biological role, aerial growth, conidiation, and dispersal of filamentous fungi in the environment rely upon a capability of their secreting small amphipathic proteins called hydrophobins (HPBs) with low sequence identity. Class I can self-assemble into an outermost layer of rodlet bundles on aerial cell surfaces, conferring cellular hydrophobicity that supports fungal growth, development and dispersal; whereas Class II form highly ordered films at water-air interfaces through intermolecular interactions but contribute nothing to the rodlet structure. Hydph12 is a class I hydrophobin involved in the formation of mycelium knots. This is Class I hydrophobin 12 from Pleurotus ostreatus (strain PC15) (Oyster mushroom).